A 262-amino-acid polypeptide reads, in one-letter code: Probable lipoprotein EnvF (262 aa).

The N-terminal stretch at 1-25 (MNKIHVTYKNLLLPITFIAATLISA) is a signal peptide. Cys26 carries the N-palmitoyl cysteine lipid modification. Cys26 is lipidated: S-diacylglycerol cysteine. Residues 227–262 (EAEKAQQLVEQSRKDIESQRKKAAGKMNEIQQTFKK) are disordered. The segment covering 237–246 (QSRKDIESQR) has biased composition (basic and acidic residues).

It localises to the cell membrane. The polypeptide is Probable lipoprotein EnvF (envF) (Salmonella typhimurium (strain LT2 / SGSC1412 / ATCC 700720)).